Here is a 281-residue protein sequence, read N- to C-terminus: Pantothenate synthetase (281 aa).

ATP is bound at residue 30–37; the sequence is MGALHRGH. H37 (proton donor) is an active-site residue. Q61 is a (R)-pantoate binding site. Residue Q61 participates in beta-alanine binding. ATP is bound at residue 147–150; that stretch reads GEKD. Residue Q153 participates in (R)-pantoate binding. ATP-binding positions include I176 and 184-187; that span reads LSSR.

Belongs to the pantothenate synthetase family. As to quaternary structure, homodimer.

The protein resides in the cytoplasm. It carries out the reaction (R)-pantoate + beta-alanine + ATP = (R)-pantothenate + AMP + diphosphate + H(+). It functions in the pathway cofactor biosynthesis; (R)-pantothenate biosynthesis; (R)-pantothenate from (R)-pantoate and beta-alanine: step 1/1. In terms of biological role, catalyzes the condensation of pantoate with beta-alanine in an ATP-dependent reaction via a pantoyl-adenylate intermediate. The protein is Pantothenate synthetase of Porphyromonas gingivalis (strain ATCC BAA-308 / W83).